A 335-amino-acid polypeptide reads, in one-letter code: Ubiquinone biosynthesis protein COQ4, mitochondrial (335 aa).

A mitochondrion-targeting transit peptide spans 1–10 (MLRLSLLRST). Residues His210, Asp211, His214, and Glu226 each contribute to the Zn(2+) site.

Belongs to the COQ4 family. Component of a multi-subunit COQ enzyme complex, composed of at least COQ3, COQ4, COQ5, COQ6, COQ7 and COQ9. Interacts with COQ3. The cofactor is Zn(2+).

The protein localises to the mitochondrion inner membrane. The enzyme catalyses 4-hydroxy-3-methoxy-5-(all-trans-hexaprenyl)benzoate + H(+) = 2-methoxy-6-(all-trans-hexaprenyl)phenol + CO2. Its pathway is cofactor biosynthesis; ubiquinone biosynthesis. Lyase that catalyzes the C1-decarboxylation of 4-hydroxy-3-methoxy-5-(all-trans-hexaprenyl)benzoic acid into 2-methoxy-6-(all-trans-hexaprenyl)phenol during ubiquinone biosynthesis. May play a role in organizing a multi-subunit COQ enzyme complex required for coenzyme Q biosynthesis. Required for steady-state levels of COQ3, COQ4, COQ6, COQ7 and COQ9 polypeptides. This Saccharomyces cerevisiae (strain ATCC 204508 / S288c) (Baker's yeast) protein is Ubiquinone biosynthesis protein COQ4, mitochondrial.